The primary structure comprises 906 residues: NADH-quinone oxidoreductase subunit G (906 aa).

Residues 2 to 83 form the 2Fe-2S ferredoxin-type domain; it reads AKIYVDSKIY…GAIISIKSTE (82 aa). [2Fe-2S] cluster-binding residues include Cys-34, Cys-45, Cys-48, and Cys-67. Residues 83–122 enclose the 4Fe-4S His(Cys)3-ligated-type domain; it reads ESEVFRSAIVELLLTNHPHDCPVCEEGGHCHLQDMTVMVK. [4Fe-4S] cluster-binding residues include His-99, Cys-103, Cys-106, Cys-112, Cys-151, Cys-154, Cys-157, Cys-201, Cys-228, Cys-231, Cys-235, and Cys-263. The 57-residue stretch at 221-277 folds into the 4Fe-4S Mo/W bis-MGD-type domain; that stretch reads MQYAPGICHNCSVGCNISIGERYGEIRRIENRYHENINHYLICDLGRFGYSHTNLNT.

The protein belongs to the complex I 75 kDa subunit family. In terms of assembly, composed of 13 different subunits. Subunits NuoCD, E, F, and G constitute the peripheral sector of the complex. [2Fe-2S] cluster serves as cofactor. Requires [4Fe-4S] cluster as cofactor.

It carries out the reaction a quinone + NADH + 5 H(+)(in) = a quinol + NAD(+) + 4 H(+)(out). Its function is as follows. NDH-1 shuttles electrons from NADH, via FMN and iron-sulfur (Fe-S) centers, to quinones in the respiratory chain. Couples the redox reaction to proton translocation (for every two electrons transferred, four hydrogen ions are translocated across the cytoplasmic membrane), and thus conserves the redox energy in a proton gradient. This chain is NADH-quinone oxidoreductase subunit G (nuoG), found in Buchnera aphidicola subsp. Acyrthosiphon pisum (strain APS) (Acyrthosiphon pisum symbiotic bacterium).